Consider the following 409-residue polypeptide: Pyrophosphate--fructose 6-phosphate 1-phosphotransferase (409 aa).

Glycine 14 provides a ligand contact to diphosphate. Residue aspartate 123 coordinates Mg(2+). Residues 151–153 (TID), 196–198 (MGR), glutamate 268, and 325–328 (YFAR) contribute to the substrate site. Residue aspartate 153 is the Proton acceptor of the active site.

The protein belongs to the phosphofructokinase type A (PFKA) family. PPi-dependent PFK group II subfamily. Clade 'P' sub-subfamily. As to quaternary structure, homotetramer. Mg(2+) is required as a cofactor.

It is found in the cytoplasm. It catalyses the reaction beta-D-fructose 6-phosphate + diphosphate = beta-D-fructose 1,6-bisphosphate + phosphate + H(+). The protein operates within carbohydrate degradation; glycolysis; D-glyceraldehyde 3-phosphate and glycerone phosphate from D-glucose: step 3/4. Its activity is regulated as follows. Non-allosteric. Functionally, catalyzes the phosphorylation of D-fructose 6-phosphate, the first committing step of glycolysis. Uses inorganic phosphate (PPi) as phosphoryl donor instead of ATP like common ATP-dependent phosphofructokinases (ATP-PFKs), which renders the reaction reversible, and can thus function both in glycolysis and gluconeogenesis. Consistently, PPi-PFK can replace the enzymes of both the forward (ATP-PFK) and reverse (fructose-bisphosphatase (FBPase)) reactions. In Methylotuvimicrobium alcaliphilum (strain DSM 19304 / NCIMB 14124 / VKM B-2133 / 20Z) (Methylomicrobium alcaliphilum), this protein is Pyrophosphate--fructose 6-phosphate 1-phosphotransferase.